The chain runs to 229 residues: Probable queuosine precursor transporter (229 aa).

A run of 7 helical transmembrane segments spans residues 6–26, 28–48, 49–69, 86–106, 118–138, 160–182, and 192–214; these read FWIFFAIIHFIIVLLFYKGFG, MGLFVWIGFATVCANLQVVKT, VELFGLTATLGNVMYGTIFFA, VWLGFSTLLTLTFVMQGVLLF, LETIFGFLPRVALGSLLAFIF, LWLRNGGSTAVSQLFDTFIFTAV, and VWLHIFISTYLIKFAVSLISLPY.

It belongs to the vitamin uptake transporter (VUT/ECF) (TC 2.A.88) family. Q precursor transporter subfamily.

The protein resides in the cell membrane. In terms of biological role, involved in the import of queuosine (Q) precursors, required for Q precursor salvage. The chain is Probable queuosine precursor transporter (ypdP) from Bacillus subtilis (strain 168).